Reading from the N-terminus, the 182-residue chain is Large ribosomal subunit protein uL10 (182 aa).

Belongs to the universal ribosomal protein uL10 family. Part of the ribosomal stalk of the 50S ribosomal subunit. The N-terminus interacts with L11 and the large rRNA to form the base of the stalk. The C-terminus forms an elongated spine to which L12 dimers bind in a sequential fashion forming a multimeric L10(L12)X complex.

Its function is as follows. Forms part of the ribosomal stalk, playing a central role in the interaction of the ribosome with GTP-bound translation factors. This Parafrankia sp. (strain EAN1pec) protein is Large ribosomal subunit protein uL10.